A 291-amino-acid chain; its full sequence is Putative carboxymethylenebutenolidase (291 aa).

A signal peptide spans 1–40; it reads MTAFDADLRSLAAQTTLSRRTVIATSLATGFALAVQPVAA. Active-site residues include Cys-170, Asp-227, and His-259.

Belongs to the dienelactone hydrolase family.

It catalyses the reaction 2-(5-oxo-2,5-dihydrofuran-2-ylidene)acetate + H2O = 4-oxohex-2-enedioate + H(+). In Methylorubrum extorquens (strain ATCC 14718 / DSM 1338 / JCM 2805 / NCIMB 9133 / AM1) (Methylobacterium extorquens), this protein is Putative carboxymethylenebutenolidase.